Consider the following 77-residue polypeptide: Apelin (77 aa).

The first 22 residues, 1–22 (MNVKILTLVIVLVVSLLCSASA), serve as a signal peptide directing secretion. The disordered stretch occupies residues 21–77 (SAGPMASTEHSKEIEEVGSMRTPLRQNPARAGRSQRPAGWRRRRPRPRLSHKGPMPF). Over residues 59-71 (GWRRRRPRPRLSH) the composition is skewed to basic residues.

It belongs to the apelin family.

The protein resides in the secreted. It is found in the extracellular space. Functionally, peptide hormone that functions as endogenous ligand for the G-protein-coupled apelin receptor (aplnra and/or aplnrb), that plays a role in cadiovascular homeostasis. Functions as a balanced agonist activating both G(i) protein pathway and beta-arrestin pathway of APLNR. Downstream G proteins activation, apelin can inhibit cAMP production and activate key intracellular effectors such as ERKs. On the other hand, APLNR activation induces beta-arrestin recruitment to the membrane leading to desensitization and internalization of the receptor. Apelin blunts cardiac hypertrophic induction from APLNR on response to pathological stimuli, but also induces myocardial hypertrophy under normal conditions. Involved in the regulation of cardiac precursor cell movements during gastrulation and heart morphogenesis. Plays a role in early coronary blood vessels formation. Mediates myocardial contractility in an ERK1/2-dependent manner. May also have a role in the central control of body fluid homeostasis. This Danio rerio (Zebrafish) protein is Apelin.